The following is an 89-amino-acid chain: Small ribosomal subunit protein bS16 (89 aa).

This sequence belongs to the bacterial ribosomal protein bS16 family.

The sequence is that of Small ribosomal subunit protein bS16 from Geobacillus stearothermophilus (Bacillus stearothermophilus).